Consider the following 250-residue polypeptide: MICYPIIMNNQLKFSYKYPSLEPGILIKRYKRFLADIELKSGGIITAHCPNTGPMTGVSTPGSNVMVSYSNNPKRKLAYTWELIEVTDNEPTWVGINTALPNRVIKLALAENLFPELGDYYEVKTEVVYGKDRKSRVDFKLISETKNIYLEVKNTTWADGRVALFPDTVTKRGQKHLRELIGVVEQGERAVCLFLINRGDCYQFAPGDVADHDYGKLLREAMIKGVEILPCRFIVTPQEINYLGIAEFIN.

Belongs to the SfsA family.

The polypeptide is Sugar fermentation stimulation protein homolog (Trichodesmium erythraeum (strain IMS101)).